Here is a 310-residue protein sequence, read N- to C-terminus: Carbamate kinase 1 (310 aa).

It belongs to the carbamate kinase family.

The protein resides in the cytoplasm. The enzyme catalyses hydrogencarbonate + NH4(+) + ATP = carbamoyl phosphate + ADP + H2O + H(+). Its pathway is metabolic intermediate metabolism; carbamoyl phosphate degradation; CO(2) and NH(3) from carbamoyl phosphate: step 1/1. The sequence is that of Carbamate kinase 1 (arcC1) from Staphylococcus aureus (strain bovine RF122 / ET3-1).